The chain runs to 403 residues: Probable tRNA sulfurtransferase (403 aa).

Residues 60 to 165 (QLAEERLKPI…KEGVFLSCRT (106 aa)) enclose the THUMP domain. ATP-binding positions include 183-184 (ML), 208-209 (HF), R265, G287, and Q296.

The protein belongs to the ThiI family.

The protein localises to the cytoplasm. The catalysed reaction is [ThiI sulfur-carrier protein]-S-sulfanyl-L-cysteine + a uridine in tRNA + 2 reduced [2Fe-2S]-[ferredoxin] + ATP + H(+) = [ThiI sulfur-carrier protein]-L-cysteine + a 4-thiouridine in tRNA + 2 oxidized [2Fe-2S]-[ferredoxin] + AMP + diphosphate. The enzyme catalyses [ThiS sulfur-carrier protein]-C-terminal Gly-Gly-AMP + S-sulfanyl-L-cysteinyl-[cysteine desulfurase] + AH2 = [ThiS sulfur-carrier protein]-C-terminal-Gly-aminoethanethioate + L-cysteinyl-[cysteine desulfurase] + A + AMP + 2 H(+). The protein operates within cofactor biosynthesis; thiamine diphosphate biosynthesis. Catalyzes the ATP-dependent transfer of a sulfur to tRNA to produce 4-thiouridine in position 8 of tRNAs, which functions as a near-UV photosensor. Also catalyzes the transfer of sulfur to the sulfur carrier protein ThiS, forming ThiS-thiocarboxylate. This is a step in the synthesis of thiazole, in the thiamine biosynthesis pathway. The sulfur is donated as persulfide by IscS. The protein is Probable tRNA sulfurtransferase of Listeria monocytogenes serovar 1/2a (strain ATCC BAA-679 / EGD-e).